The following is a 446-amino-acid chain: NADH-quinone oxidoreductase subunit D (446 aa).

Belongs to the complex I 49 kDa subunit family. In terms of assembly, NDH-1 is composed of 14 different subunits. Subunits NuoB, C, D, E, F, and G constitute the peripheral sector of the complex.

It localises to the cell membrane. It carries out the reaction a quinone + NADH + 5 H(+)(in) = a quinol + NAD(+) + 4 H(+)(out). NDH-1 shuttles electrons from NADH, via FMN and iron-sulfur (Fe-S) centers, to quinones in the respiratory chain. The immediate electron acceptor for the enzyme in this species is believed to be a menaquinone. Couples the redox reaction to proton translocation (for every two electrons transferred, four hydrogen ions are translocated across the cytoplasmic membrane), and thus conserves the redox energy in a proton gradient. This chain is NADH-quinone oxidoreductase subunit D, found in Nocardioides sp. (strain ATCC BAA-499 / JS614).